The sequence spans 419 residues: Pyrophosphate--fructose 6-phosphate 1-phosphotransferase (419 aa).

G13 contributes to the diphosphate binding site. Residues 142-144, 190-192, E247, and 297-300 contribute to the substrate site; these read TVD, MGR, and YLQR. D144 (proton acceptor) is an active-site residue.

This sequence belongs to the phosphofructokinase type A (PFKA) family. PPi-dependent PFK group II subfamily. Clade 'B2' sub-subfamily. In terms of assembly, homodimer. It depends on Mg(2+) as a cofactor.

Its subcellular location is the cytoplasm. The catalysed reaction is beta-D-fructose 6-phosphate + diphosphate = beta-D-fructose 1,6-bisphosphate + phosphate + H(+). The protein operates within carbohydrate degradation; glycolysis; D-glyceraldehyde 3-phosphate and glycerone phosphate from D-glucose: step 3/4. With respect to regulation, non-allosteric. Catalyzes the phosphorylation of D-fructose 6-phosphate, the first committing step of glycolysis. Uses inorganic phosphate (PPi) as phosphoryl donor instead of ATP like common ATP-dependent phosphofructokinases (ATP-PFKs), which renders the reaction reversible, and can thus function both in glycolysis and gluconeogenesis. Consistently, PPi-PFK can replace the enzymes of both the forward (ATP-PFK) and reverse (fructose-bisphosphatase (FBPase)) reactions. The polypeptide is Pyrophosphate--fructose 6-phosphate 1-phosphotransferase (Halomonas elongata (strain ATCC 33173 / DSM 2581 / NBRC 15536 / NCIMB 2198 / 1H9)).